The primary structure comprises 233 residues: UPF0502 protein Sden_2282 (233 aa).

Over residues 178-198 (TQHQRPPQTPHLSSRTNVDNS) the composition is skewed to polar residues. A disordered region spans residues 178 to 204 (TQHQRPPQTPHLSSRTNVDNSYESDER).

The protein belongs to the UPF0502 family.

The polypeptide is UPF0502 protein Sden_2282 (Shewanella denitrificans (strain OS217 / ATCC BAA-1090 / DSM 15013)).